A 451-amino-acid polypeptide reads, in one-letter code: tRNA-2-methylthio-N(6)-dimethylallyladenosine synthase (451 aa).

One can recognise an MTTase N-terminal domain in the interval 2 to 119 (QNLYIKTYGC…LPDLLDACLA (118 aa)). Residues Cys-11, Cys-48, Cys-82, Cys-157, Cys-161, and Cys-164 each contribute to the [4Fe-4S] cluster site. Residues 143 to 377 (GRDGATAFVT…RINGLAQGYA (235 aa)) form the Radical SAM core domain. One can recognise a TRAM domain in the interval 378 to 441 (QALVGTQQAV…PNSLRGRAAL (64 aa)).

Belongs to the methylthiotransferase family. MiaB subfamily. Monomer. The cofactor is [4Fe-4S] cluster.

Its subcellular location is the cytoplasm. The enzyme catalyses N(6)-dimethylallyladenosine(37) in tRNA + (sulfur carrier)-SH + AH2 + 2 S-adenosyl-L-methionine = 2-methylsulfanyl-N(6)-dimethylallyladenosine(37) in tRNA + (sulfur carrier)-H + 5'-deoxyadenosine + L-methionine + A + S-adenosyl-L-homocysteine + 2 H(+). In terms of biological role, catalyzes the methylthiolation of N6-(dimethylallyl)adenosine (i(6)A), leading to the formation of 2-methylthio-N6-(dimethylallyl)adenosine (ms(2)i(6)A) at position 37 in tRNAs that read codons beginning with uridine. In Acidithiobacillus ferrooxidans (strain ATCC 23270 / DSM 14882 / CIP 104768 / NCIMB 8455) (Ferrobacillus ferrooxidans (strain ATCC 23270)), this protein is tRNA-2-methylthio-N(6)-dimethylallyladenosine synthase.